The following is a 208-amino-acid chain: LexA repressor (208 aa).

The segment at residues Val-30–Ser-50 is a DNA-binding region (H-T-H motif). Active-site for autocatalytic cleavage activity residues include Ser-129 and Lys-167.

This sequence belongs to the peptidase S24 family. Homodimer.

The catalysed reaction is Hydrolysis of Ala-|-Gly bond in repressor LexA.. Represses a number of genes involved in the response to DNA damage (SOS response), including recA and lexA. In the presence of single-stranded DNA, RecA interacts with LexA causing an autocatalytic cleavage which disrupts the DNA-binding part of LexA, leading to derepression of the SOS regulon and eventually DNA repair. In Lactobacillus acidophilus (strain ATCC 700396 / NCK56 / N2 / NCFM), this protein is LexA repressor.